The sequence spans 71 residues: Brevinin-1SN2 (71 aa).

An N-terminal signal peptide occupies residues 1–22; sequence MFTMKKSLLLIFFLGTINLSLC. A propeptide spans 23-45 (removed in mature form); it reads EEERNADEDEKRDGDDESDVEVQ. A disulfide bridge connects residues C65 and C71.

The protein belongs to the frog skin active peptide (FSAP) family. Brevinin subfamily. As to expression, expressed by the skin glands.

It localises to the secreted. Its function is as follows. Antimicrobial peptide. Active against a variety of Gram-negative and Gram-positive bacterial strains. Active against fungus C.glabrata 090902 and C.albicans ATCC 10231. Shows hemolytic activity against human erythrocytes. The polypeptide is Brevinin-1SN2 (Sylvirana spinulosa (Fine-spined frog)).